The chain runs to 62 residues: Large ribosomal subunit protein bL28 (62 aa).

Belongs to the bacterial ribosomal protein bL28 family.

The polypeptide is Large ribosomal subunit protein bL28 (Helicobacter pylori (strain Shi470)).